The following is a 459-amino-acid chain: Inositol-trisphosphate 3-kinase A (459 aa).

Residues 1 to 29 (MTLPGRPTGMARPRGAGPCSPGLERAPRR) are disordered. Arg35, Arg55, and Arg62 each carry omega-N-methylarginine. Residues 49-164 (AAAGEPRARG…TSEDVGQKSH (116 aa)) form a disordered region. Positions 116 to 132 (RRLSTSSLSSTGSSSLL) are enriched in low complexity. Ser135 and Ser195 each carry phosphoserine. ATP is bound by residues Ser195, Lys207, 247–249 (QDL), and Asp260. Lys262 and Arg283 together coordinate substrate. Residues 285-293 (DMYKKMLAV) form a calmodulin-binding region. 310–317 (KPRYMQWR) serves as a coordination point for substrate. Residues Lys334 and Asp414 each contribute to the ATP site. Lys417 contributes to the substrate binding site.

The protein belongs to the inositol phosphokinase (IPK) family.

Its subcellular location is the cytoplasm. It localises to the cytoskeleton. The catalysed reaction is 1D-myo-inositol 1,4,5-trisphosphate + ATP = 1D-myo-inositol 1,3,4,5-tetrakisphosphate + ADP + H(+). Activated by calcium/calmodulin. Functionally, catalyzes the phosphorylation of 1D-myo-inositol 1,4,5-trisphosphate (InsP3) into 1D-myo-inositol 1,3,4,5-tetrakisphosphate and participates to the regulation of calcium homeostasis. The chain is Inositol-trisphosphate 3-kinase A from Mus musculus (Mouse).